The primary structure comprises 150 residues: Linear element protein rec25 (150 aa).

Phosphoserine is present on S11.

As to quaternary structure, component of linear elements (LinEs), which are similar to synaptonemal complexes, at least composed of rec27, rec25, rec10 and mug20. Interacts with rec10; the interaction is direct.

It is found in the cytoplasm. The protein localises to the nucleus. Its subcellular location is the chromosome. In terms of biological role, during meiotic DNA recombination, binds to and may help activate DNA double-strand break (DSB) hotspot sites. In Schizosaccharomyces pombe (strain 972 / ATCC 24843) (Fission yeast), this protein is Linear element protein rec25.